A 238-amino-acid chain; its full sequence is ATP synthase subunit a (238 aa).

5 helical membrane passes run 17–37, 75–95, 112–132, 172–192, and 194–214; these read LSNI…AIIC, FHVL…LGLP, DPIV…YYGI, YGNI…LAHI, and IFVG…SLFI.

It belongs to the ATPase A chain family. In terms of assembly, F-type ATPases have 2 components, CF(1) - the catalytic core - and CF(0) - the membrane proton channel. CF(1) has five subunits: alpha(3), beta(3), gamma(1), delta(1), epsilon(1). CF(0) has three main subunits: a(1), b(2) and c(9-12). The alpha and beta chains form an alternating ring which encloses part of the gamma chain. CF(1) is attached to CF(0) by a central stalk formed by the gamma and epsilon chains, while a peripheral stalk is formed by the delta and b chains.

The protein localises to the cell membrane. Functionally, key component of the proton channel; it plays a direct role in the translocation of protons across the membrane. This chain is ATP synthase subunit a, found in Listeria monocytogenes serovar 1/2a (strain ATCC BAA-679 / EGD-e).